The primary structure comprises 154 residues: Protein X (154 aa).

The segment at 68–117 is mitochondrial targeting sequence; the sequence is PCALRFTSARRMETTVNAHQILPKVLHKRTLGLSAMSTTDLEAYFKDCLF.

This sequence belongs to the orthohepadnavirus protein X family. May form homodimer. May interact with host CEBPA, CFLAR, CREB1, DDB1, E4F1, HBXIP, HSPD1/HSP60, NFKBIA, POLR2E and SMAD4. Interacts with host SMC5-SMC6 complex and induces its degradation. Interacts with host TRPC4AP; leading to prevent ubiquitination of TRPC4AP. Interacts with host PLSCR1; this interaction promotes ubiquitination and degradation of HBx and impairs HBx-mediated cell proliferation. Post-translationally, a fraction may be phosphorylated in insect cells and HepG2 cells, a human hepatoblastoma cell line. Phosphorylated in vitro by host protein kinase C or mitogen-activated protein kinase. N-acetylated in insect cells.

The protein localises to the host cytoplasm. It is found in the host nucleus. It localises to the host mitochondrion. In terms of biological role, multifunctional protein that plays a role in silencing host antiviral defenses and promoting viral transcription. Does not seem to be essential for HBV infection. May be directly involved in development of cirrhosis and liver cancer (hepatocellular carcinoma). Most of cytosolic activities involve modulation of cytosolic calcium. The effect on apoptosis is controversial depending on the cell types in which the studies have been conducted. May induce apoptosis by localizing in mitochondria and causing loss of mitochondrial membrane potential. May also modulate apoptosis by binding host CFLAR, a key regulator of the death-inducing signaling complex (DISC). Promotes viral transcription by using the host E3 ubiquitin ligase DDB1 to target the SMC5-SMC6 complex to proteasomal degradation. This host complex would otherwise bind to viral episomal DNA, and prevents its transcription. Moderately stimulates transcription of many different viral and cellular transcription elements. Promoters and enhancers stimulated by HBx contain DNA binding sites for NF-kappa-B, AP-1, AP-2, c-EBP, ATF/CREB, or the calcium-activated factor NF-AT. In Hepatitis B virus genotype E (isolate Chimpanzee/Ch195/1999) (HBV-E), this protein is Protein X.